Reading from the N-terminus, the 159-residue chain is Eukaryotic translation initiation factor 5A-2 (159 aa).

Over residues 1 to 12 (MSDEEHQFESKA) the composition is skewed to basic and acidic residues. The segment at 1–23 (MSDEEHQFESKADAGASKTYPQQ) is disordered. The residue at position 52 (lysine 52) is a Hypusine.

It belongs to the eIF-5A family. In terms of processing, lys-52 undergoes hypusination, a unique post-translational modification that consists in the addition of a butylamino group from spermidine to lysine side chain, leading to the formation of the unusual amino acid hypusine. eIF-5As are the only known proteins to undergo this modification, which is essential for their function.

Translation factor that promotes translation elongation and termination, particularly upon ribosome stalling at specific amino acid sequence contexts. Binds between the exit (E) and peptidyl (P) site of the ribosome and promotes rescue of stalled ribosome: specifically required for efficient translation of polyproline-containing peptides as well as other motifs that stall the ribosome. Acts as a ribosome quality control (RQC) cofactor by joining the RQC complex to facilitate peptidyl transfer during CAT tailing step. The chain is Eukaryotic translation initiation factor 5A-2 (EIF-5A2) from Nicotiana plumbaginifolia (Leadwort-leaved tobacco).